Here is a 447-residue protein sequence, read N- to C-terminus: Naphthalene 1,2-dioxygenase system, large oxygenase component (447 aa).

Positions 37 to 135 (WLFLTHDSLI…IKKKCLGLKE (99 aa)) constitute a Rieske domain. [2Fe-2S] cluster contacts are provided by Cys-79, His-81, Cys-99, and His-102. Positions 206, 211, and 360 each coordinate Fe cation.

Belongs to the bacterial ring-hydroxylating dioxygenase alpha subunit family. In terms of assembly, the naphthalene dioxygenase (NDO) multicomponent enzyme system is composed of an electron transfer component and a dioxygenase component (iron sulfur protein (ISP)). The electron transfer component is composed of a ferredoxin reductase (NagAa) and a ferredoxin (NagAb), and the dioxygenase component is formed by a large alpha subunit (NagAc) and a small beta subunit (NagAd). It depends on [2Fe-2S] cluster as a cofactor. The cofactor is Fe(2+).

It catalyses the reaction naphthalene + NADH + O2 + H(+) = (1R,2S)-1,2-dihydronaphthalene-1,2-diol + NAD(+). It participates in aromatic compound metabolism; naphthalene degradation. In terms of biological role, component of the naphthalene dioxygenase (NDO) multicomponent enzyme system which catalyzes the incorporation of both atoms of molecular oxygen into naphthalene to form cis-(1R,2S)-dihydroxy-1,2-dihydronaphthalene. The alpha subunit has a catalytic role in the holoenzyme. Also able to use styrene as substrate. In Ralstonia sp, this protein is Naphthalene 1,2-dioxygenase system, large oxygenase component.